The sequence spans 186 residues: UPF0340 protein M6_Spy1622 (186 aa).

It belongs to the UPF0340 family.

This chain is UPF0340 protein M6_Spy1622, found in Streptococcus pyogenes serotype M6 (strain ATCC BAA-946 / MGAS10394).